A 156-amino-acid chain; its full sequence is ATP synthase subunit b', chloroplastic (156 aa).

A helical transmembrane segment spans residues 24–44; sequence ATLPLVAIQFILLMVTLNIIL.

It belongs to the ATPase B chain family. As to quaternary structure, F-type ATPases have 2 components, F(1) - the catalytic core - and F(0) - the membrane proton channel. F(1) has five subunits: alpha(3), beta(3), gamma(1), delta(1), epsilon(1). F(0) has four main subunits: a(1), b(1), b'(1) and c(10-14). The alpha and beta chains form an alternating ring which encloses part of the gamma chain. F(1) is attached to F(0) by a central stalk formed by the gamma and epsilon chains, while a peripheral stalk is formed by the delta, b and b' chains.

It localises to the plastid. Its subcellular location is the chloroplast thylakoid membrane. Functionally, f(1)F(0) ATP synthase produces ATP from ADP in the presence of a proton or sodium gradient. F-type ATPases consist of two structural domains, F(1) containing the extramembraneous catalytic core and F(0) containing the membrane proton channel, linked together by a central stalk and a peripheral stalk. During catalysis, ATP synthesis in the catalytic domain of F(1) is coupled via a rotary mechanism of the central stalk subunits to proton translocation. In terms of biological role, component of the F(0) channel, it forms part of the peripheral stalk, linking F(1) to F(0). The b'-subunit is a diverged and duplicated form of b found in plants and photosynthetic bacteria. The polypeptide is ATP synthase subunit b', chloroplastic (Thalassiosira pseudonana (Marine diatom)).